We begin with the raw amino-acid sequence, 447 residues long: N-succinylarginine dihydrolase (447 aa).

Substrate-binding positions include 19–28, Asn110, and 137–138; these read AGLSFGNEAS and HR. The active site involves Glu174. A substrate-binding site is contributed by Arg213. His249 is a catalytic residue. Positions 251 and 364 each coordinate substrate. Catalysis depends on Cys370, which acts as the Nucleophile.

It belongs to the succinylarginine dihydrolase family. As to quaternary structure, homodimer.

It carries out the reaction N(2)-succinyl-L-arginine + 2 H2O + 2 H(+) = N(2)-succinyl-L-ornithine + 2 NH4(+) + CO2. The protein operates within amino-acid degradation; L-arginine degradation via AST pathway; L-glutamate and succinate from L-arginine: step 2/5. Its function is as follows. Catalyzes the hydrolysis of N(2)-succinylarginine into N(2)-succinylornithine, ammonia and CO(2). The protein is N-succinylarginine dihydrolase of Yersinia pseudotuberculosis serotype O:1b (strain IP 31758).